A 446-amino-acid chain; its full sequence is Nuclear envelope morphology protein 1 (446 aa).

Residues 53 to 80 (VDQQYDHSSSHLKESDQNQERKNSVPKK) form a disordered region. A compositionally biased stretch (basic and acidic residues) spans 56–75 (QYDHSSSHLKESDQNQERKN). Residues 87 to 103 (ILIEKIASILWALLLFL) traverse the membrane as a helical segment. A disordered region spans residues 132 to 168 (HTDKRNRGSNASENELPVSSSNINDSSEKTNPKNCNL). Polar residues predominate over residues 139–156 (GSNASENELPVSSSNIND). Residues 247–424 (NTQKKKKLVI…LNLLPFLEAM (178 aa)) enclose the FCP1 homology domain.

Belongs to the Dullard family. Component of the NEM1-SPO7 complex.

It localises to the endoplasmic reticulum membrane. The protein localises to the nucleus membrane. The catalysed reaction is O-phospho-L-seryl-[protein] + H2O = L-seryl-[protein] + phosphate. It catalyses the reaction O-phospho-L-threonyl-[protein] + H2O = L-threonyl-[protein] + phosphate. Its function is as follows. Catalytic component of the NEM1-SPO7 complex which acts as a phosphatase and dephosphorylates the phosphatidic acid phosphohydrolase PAH1. Essential for the formation of a spherical nucleus and meiotic division. The NEM1-SPOo7 protein phosphatase is required for efficient mitophagy under prolonged respiration, as well as for reticulophagy and pexophagy. The polypeptide is Nuclear envelope morphology protein 1 (NEM1) (Saccharomyces cerevisiae (strain ATCC 204508 / S288c) (Baker's yeast)).